Reading from the N-terminus, the 323-residue chain is MSLNEQWQPSASIQNLLARAKIIADIRRFFTERGLLEVETPVLSEFGVTDVHLSTFSTAFTSPFMEKSKTLWLTTSPEYHMKRLLAAGSGAIFQLCKVFRNEESGKKHNPEFTMLEWYRPHFDMHRLINEVDDLLQQTLDCEPAEMASYQFVFQEHVGIDPLSAPINELIEKARECHLDGAENEDRDTLLQFLFSTLVEPNIGQNKPIAVYHFPATQAALAQISSEDHRVAERFEFYYKGIELANGFNELTDAQEQEHRFNQDNRLREQLGLPQHEIDHRFLGALQAGLPNTAGVALGVDRLIMLALGAENISEVISFNIDCA.

76-78 (SPE) provides a ligand contact to substrate. ATP is bound by residues 100–102 (RNE) and N109. Y118 serves as a coordination point for substrate. 242 to 243 (EL) contacts ATP. E249 lines the substrate pocket. Residue G298 participates in ATP binding.

It belongs to the class-II aminoacyl-tRNA synthetase family. EpmA subfamily. In terms of assembly, homodimer.

The enzyme catalyses D-beta-lysine + L-lysyl-[protein] + ATP = N(6)-((3R)-3,6-diaminohexanoyl)-L-lysyl-[protein] + AMP + diphosphate + H(+). In terms of biological role, with EpmB is involved in the beta-lysylation step of the post-translational modification of translation elongation factor P (EF-P). Catalyzes the ATP-dependent activation of (R)-beta-lysine produced by EpmB, forming a lysyl-adenylate, from which the beta-lysyl moiety is then transferred to the epsilon-amino group of a conserved specific lysine residue in EF-P. This chain is Elongation factor P--(R)-beta-lysine ligase, found in Histophilus somni (strain 129Pt) (Haemophilus somnus).